A 149-amino-acid chain; its full sequence is Nucleoside diphosphate kinase (149 aa).

6 residues coordinate ATP: Lys9, Phe57, Arg85, Thr91, Arg102, and Asn112. Residue His115 is the Pros-phosphohistidine intermediate of the active site.

The protein belongs to the NDK family. In terms of assembly, homotetramer. Requires Mg(2+) as cofactor.

The protein localises to the cytoplasm. It catalyses the reaction a 2'-deoxyribonucleoside 5'-diphosphate + ATP = a 2'-deoxyribonucleoside 5'-triphosphate + ADP. The enzyme catalyses a ribonucleoside 5'-diphosphate + ATP = a ribonucleoside 5'-triphosphate + ADP. Its function is as follows. Major role in the synthesis of nucleoside triphosphates other than ATP. The ATP gamma phosphate is transferred to the NDP beta phosphate via a ping-pong mechanism, using a phosphorylated active-site intermediate. In Staphylococcus haemolyticus (strain JCSC1435), this protein is Nucleoside diphosphate kinase.